Consider the following 234-residue polypeptide: Large ribosomal subunit protein uL3 (234 aa).

The tract at residues 137–156 (AGHGVERKHRSPGSVGGCAT) is disordered.

The protein belongs to the universal ribosomal protein uL3 family. In terms of assembly, part of the 50S ribosomal subunit. Forms a cluster with proteins L14 and L19.

Functionally, one of the primary rRNA binding proteins, it binds directly near the 3'-end of the 23S rRNA, where it nucleates assembly of the 50S subunit. The protein is Large ribosomal subunit protein uL3 of Frankia alni (strain DSM 45986 / CECT 9034 / ACN14a).